An 833-amino-acid polypeptide reads, in one-letter code: Patatin-like phospholipase domain-containing protein SNOG_00918 (833 aa).

Disordered stretches follow at residues 1 to 20 (MTDV…SAFD) and 49 to 71 (HLSP…SANN). A helical membrane pass occupies residues 108 to 128 (WPLLVVVLGWLLFLSIAYVFT). The PNPLA domain maps to 301–457 (LCLSGGATFA…RTDIPLKALN (157 aa)). The GXSXG signature appears at 332 to 336 (GTSGG). Catalysis depends on S334, which acts as the Nucleophile. D444 acts as the Proton acceptor in catalysis. Disordered regions lie at residues 630-657 (TKSK…FSRP) and 680-833 (LRTD…GKGL). A compositionally biased stretch (low complexity) spans 644–655 (SGSESSSSADFS). Residues 689–707 (DTPNSPSLSARLTGWWNTK) show a composition bias toward polar residues. Composition is skewed to basic and acidic residues over residues 740-750 (RPPKEVRDLQA), 759-769 (RNSDFLEEIRR), and 782-794 (DEGR…RGDV). Positions 809–819 (EFGDNEGDGEE) are enriched in acidic residues.

It belongs to the PLPL family.

The protein resides in the membrane. Functionally, probable lipid hydrolase. In Phaeosphaeria nodorum (strain SN15 / ATCC MYA-4574 / FGSC 10173) (Glume blotch fungus), this protein is Patatin-like phospholipase domain-containing protein SNOG_00918.